Here is a 336-residue protein sequence, read N- to C-terminus: Dihydroorotate dehydrogenase (quinone) (336 aa).

Residues 62 to 66 (AGLDK) and Thr86 contribute to the FMN site. Lys66 lines the substrate pocket. 111-115 (NRMGF) lines the substrate pocket. Residues Asn139 and Asn172 each contribute to the FMN site. Asn172 provides a ligand contact to substrate. Ser175 functions as the Nucleophile in the catalytic mechanism. Asn177 lines the substrate pocket. Residues Lys217 and Thr245 each coordinate FMN. Residue 246–247 (NT) participates in substrate binding. FMN is bound by residues Gly268, Gly297, and 318-319 (YS).

It belongs to the dihydroorotate dehydrogenase family. Type 2 subfamily. Monomer. Requires FMN as cofactor.

Its subcellular location is the cell membrane. The enzyme catalyses (S)-dihydroorotate + a quinone = orotate + a quinol. It functions in the pathway pyrimidine metabolism; UMP biosynthesis via de novo pathway; orotate from (S)-dihydroorotate (quinone route): step 1/1. Catalyzes the conversion of dihydroorotate to orotate with quinone as electron acceptor. The sequence is that of Dihydroorotate dehydrogenase (quinone) from Salmonella typhi.